We begin with the raw amino-acid sequence, 548 residues long: CTP synthase (548 aa).

The amidoligase domain stretch occupies residues 1-276; it reads MPTELTDYDP…DQYVMEQLGL (276 aa). S25 provides a ligand contact to CTP. S25 is a UTP binding site. 26 to 31 serves as a coordination point for ATP; sequence GLGKGI. Y66 is an L-glutamine binding site. D83 is an ATP binding site. Positions 83 and 151 each coordinate Mg(2+). Residues 158-160, 197-202, and K233 each bind CTP; these read DIE and KTKPTQ. Residues 197-202 and K233 each bind UTP; that span reads KTKPTQ. A Glutamine amidotransferase type-1 domain is found at 303–541; sequence DIALVGKYAM…VETILETTDT (239 aa). G363 is a binding site for L-glutamine. Catalysis depends on C390, which acts as the Nucleophile; for glutamine hydrolysis. L-glutamine is bound by residues 391-394, E414, and R471; that span reads LGFQ. Catalysis depends on residues H514 and E516.

The protein belongs to the CTP synthase family. As to quaternary structure, homotetramer.

The catalysed reaction is UTP + L-glutamine + ATP + H2O = CTP + L-glutamate + ADP + phosphate + 2 H(+). It catalyses the reaction L-glutamine + H2O = L-glutamate + NH4(+). It carries out the reaction UTP + NH4(+) + ATP = CTP + ADP + phosphate + 2 H(+). The protein operates within pyrimidine metabolism; CTP biosynthesis via de novo pathway; CTP from UDP: step 2/2. With respect to regulation, allosterically activated by GTP, when glutamine is the substrate; GTP has no effect on the reaction when ammonia is the substrate. The allosteric effector GTP functions by stabilizing the protein conformation that binds the tetrahedral intermediate(s) formed during glutamine hydrolysis. Inhibited by the product CTP, via allosteric rather than competitive inhibition. Functionally, catalyzes the ATP-dependent amination of UTP to CTP with either L-glutamine or ammonia as the source of nitrogen. Regulates intracellular CTP levels through interactions with the four ribonucleotide triphosphates. The sequence is that of CTP synthase from Natronomonas pharaonis (strain ATCC 35678 / DSM 2160 / CIP 103997 / JCM 8858 / NBRC 14720 / NCIMB 2260 / Gabara) (Halobacterium pharaonis).